The following is a 126-amino-acid chain: Gene 82 protein (126 aa).

The polypeptide is Gene 82 protein (82) (Mycobacterium phage L5 (Mycobacteriophage L5)).